A 320-amino-acid polypeptide reads, in one-letter code: 4-hydroxy-3-methylbut-2-enyl diphosphate reductase (320 aa).

Cysteine 12 provides a ligand contact to [4Fe-4S] cluster. 2 residues coordinate (2E)-4-hydroxy-3-methylbut-2-enyl diphosphate: histidine 41 and histidine 74. Positions 41 and 74 each coordinate dimethylallyl diphosphate. Isopentenyl diphosphate-binding residues include histidine 41 and histidine 74. Position 96 (cysteine 96) interacts with [4Fe-4S] cluster. Residue histidine 124 coordinates (2E)-4-hydroxy-3-methylbut-2-enyl diphosphate. Histidine 124 serves as a coordination point for dimethylallyl diphosphate. Histidine 124 serves as a coordination point for isopentenyl diphosphate. The active-site Proton donor is the glutamate 126. Threonine 167 lines the (2E)-4-hydroxy-3-methylbut-2-enyl diphosphate pocket. [4Fe-4S] cluster is bound at residue cysteine 197. Residues serine 225, serine 226, asparagine 227, and serine 269 each contribute to the (2E)-4-hydroxy-3-methylbut-2-enyl diphosphate site. 4 residues coordinate dimethylallyl diphosphate: serine 225, serine 226, asparagine 227, and serine 269. Isopentenyl diphosphate contacts are provided by serine 225, serine 226, asparagine 227, and serine 269.

Belongs to the IspH family. The cofactor is [4Fe-4S] cluster.

The enzyme catalyses isopentenyl diphosphate + 2 oxidized [2Fe-2S]-[ferredoxin] + H2O = (2E)-4-hydroxy-3-methylbut-2-enyl diphosphate + 2 reduced [2Fe-2S]-[ferredoxin] + 2 H(+). It catalyses the reaction dimethylallyl diphosphate + 2 oxidized [2Fe-2S]-[ferredoxin] + H2O = (2E)-4-hydroxy-3-methylbut-2-enyl diphosphate + 2 reduced [2Fe-2S]-[ferredoxin] + 2 H(+). It participates in isoprenoid biosynthesis; dimethylallyl diphosphate biosynthesis; dimethylallyl diphosphate from (2E)-4-hydroxy-3-methylbutenyl diphosphate: step 1/1. It functions in the pathway isoprenoid biosynthesis; isopentenyl diphosphate biosynthesis via DXP pathway; isopentenyl diphosphate from 1-deoxy-D-xylulose 5-phosphate: step 6/6. Functionally, catalyzes the conversion of 1-hydroxy-2-methyl-2-(E)-butenyl 4-diphosphate (HMBPP) into a mixture of isopentenyl diphosphate (IPP) and dimethylallyl diphosphate (DMAPP). Acts in the terminal step of the DOXP/MEP pathway for isoprenoid precursor biosynthesis. In Francisella tularensis subsp. novicida (strain U112), this protein is 4-hydroxy-3-methylbut-2-enyl diphosphate reductase.